Consider the following 57-residue polypeptide: U-Asilidin(1)-Mar2a (57 aa).

The first 24 residues, 1 to 24 (MAPLLKLNILLLIVLICFTFHANA), serve as a signal peptide directing secretion. Cystine bridges form between C28–C44, C35–C48, and C43–C53.

This sequence belongs to the asilidin-1 family. Expressed by the venom gland. Exclusively expressed in the venom thoracic glands (and not in body tissues).

The protein resides in the secreted. May act as a neurotoxin. The polypeptide is U-Asilidin(1)-Mar2a (Machimus arthriticus (Breck robberfly)).